The following is a 123-amino-acid chain: Large ribosomal subunit protein bL12 (123 aa).

This sequence belongs to the bacterial ribosomal protein bL12 family. As to quaternary structure, homodimer. Part of the ribosomal stalk of the 50S ribosomal subunit. Forms a multimeric L10(L12)X complex, where L10 forms an elongated spine to which 2 to 4 L12 dimers bind in a sequential fashion. Binds GTP-bound translation factors.

Forms part of the ribosomal stalk which helps the ribosome interact with GTP-bound translation factors. Is thus essential for accurate translation. The protein is Large ribosomal subunit protein bL12 of Rhodopseudomonas palustris (strain BisA53).